Consider the following 245-residue polypeptide: MANLGCWMLVVFVATWSDLGLCKKRPKPGGWNTGGSRYPGQGSPGGNRYPPQGGGGWGQPHGGGWGQPHGGGWGQPHGGGWGQGGGTHNQWHKPSKPKTSMKHMAGAAAAGAVVGGLGGYMLGSAMSRPLIHFGNDYEDRYYRENMYRYPNQVYYRPVDQYSNQNNFVHDCVNITIKQHTVTTTTKGENFTETDVKMMERVVEQMCITQYEKESQAYYQRGSSMVLFSSPPVILLISFLIFLIVG.

Positions 1–22 (MANLGCWMLVVFVATWSDLGLC) are cleaved as a signal peptide. Positions 23 to 222 (KKRPKPGGWN…ESQAYYQRGS (200 aa)) are interaction with GRB2, ERI3 and SYN1. The segment at 25 to 102 (RPKPGGWNTG…KPSKPKTSMK (78 aa)) is disordered. 4 tandem repeats follow at residues 51-59 (PQGGGGWGQ), 60-67 (PHGGGWGQ), 68-75 (PHGGGWGQ), and 76-83 (PHGGGWGQ). Residues 51-83 (PQGGGGWGQPHGGGWGQPHGGGWGQPHGGGWGQ) form a 4 X 8 AA tandem repeats of P-H-G-G-G-W-G-Q region. Positions 52–87 (QGGGGWGQPHGGGWGQPHGGGWGQPHGGGWGQGGGT) are enriched in gly residues. Positions 54, 55, 61, 62, 63, 69, 70, 71, 77, 78, and 79 each coordinate Cu(2+). Basic residues predominate over residues 90-101 (QWHKPSKPKTSM). An intrachain disulfide couples Cys-171 to Cys-206. N-linked (GlcNAc...) asparagine glycosylation is found at Asn-173 and Asn-189. Ser-222 carries the GPI-anchor amidated serine lipid modification. Positions 223–245 (SMVLFSSPPVILLISFLIFLIVG) are cleaved as a propeptide — removed in mature form.

It belongs to the prion family. As to quaternary structure, monomer and homodimer. Has a tendency to aggregate into amyloid fibrils containing a cross-beta spine, formed by a steric zipper of superposed beta-strands. Soluble oligomers may represent an intermediate stage on the path to fibril formation. Copper binding may promote oligomerization. Interacts with GRB2, APP, ERI3/PRNPIP and SYN1. Mislocalized cytosolically exposed PrP interacts with MGRN1; this interaction alters MGRN1 subcellular location and causes lysosomal enlargement. Interacts with KIAA1191.

The protein localises to the cell membrane. It localises to the golgi apparatus. Its function is as follows. Its primary physiological function is unclear. Has cytoprotective activity against internal or environmental stresses. May play a role in neuronal development and synaptic plasticity. May be required for neuronal myelin sheath maintenance. May play a role in iron uptake and iron homeostasis. Soluble oligomers are toxic to cultured neuroblastoma cells and induce apoptosis (in vitro). Association with GPC1 (via its heparan sulfate chains) targets PRNP to lipid rafts. Also provides Cu(2+) or Zn(2+) for the ascorbate-mediated GPC1 deaminase degradation of its heparan sulfate side chains. This is Major prion protein (PRNP) from Cercopithecus diana (Diana monkey).